A 153-amino-acid chain; its full sequence is SKP1-like protein 9 (153 aa).

The interval 95–153 (IKAANYLNIKSLFDLACQTVAEIIKGNTPEQIREFFNIENDLTPEEEAAIRRENKWAFE) is interaction with the F-box domain of F-box proteins.

Belongs to the SKP1 family. Part of a SCF (SKP1-cullin-F-box) protein ligase complex. Interacts with CPR1/CPR30 and At3g61590. As to expression, expressed in leaves, shoot apical meristem (SAM), roots, flowers and pollen.

It localises to the nucleus. It participates in protein modification; protein ubiquitination. Its function is as follows. Involved in ubiquitination and subsequent proteasomal degradation of target proteins. Together with CUL1, RBX1 and a F-box protein, it forms a SCF E3 ubiquitin ligase complex. The functional specificity of this complex depends on the type of F-box protein. In the SCF complex, it serves as an adapter that links the F-box protein to CUL1. The sequence is that of SKP1-like protein 9 (ASK9) from Arabidopsis thaliana (Mouse-ear cress).